The sequence spans 475 residues: Citrate synthase, mitochondrial (475 aa).

Catalysis depends on residues His-310, His-356, and Asp-411.

It belongs to the citrate synthase family.

It localises to the mitochondrion matrix. The catalysed reaction is oxaloacetate + acetyl-CoA + H2O = citrate + CoA + H(+). It functions in the pathway carbohydrate metabolism; tricarboxylic acid cycle; isocitrate from oxaloacetate: step 1/2. This chain is Citrate synthase, mitochondrial (cit-1), found in Aspergillus niger.